A 571-amino-acid polypeptide reads, in one-letter code: Glutamine--tRNA ligase (571 aa).

The 'HIGH' region motif lies at 35–45; that stretch reads PEPNGYLHIGH. Residues 36-38 and 42-48 each bind ATP; these read EPN and HIGHAKS. Positions 68 and 213 each coordinate L-glutamine. ATP-binding positions include T232, 262 to 263, and 270 to 272; these read RL and LSK. The short motif at 269-273 is the 'KMSKS' region element; sequence ILSKR.

This sequence belongs to the class-I aminoacyl-tRNA synthetase family. Monomer.

The protein resides in the cytoplasm. The catalysed reaction is tRNA(Gln) + L-glutamine + ATP = L-glutaminyl-tRNA(Gln) + AMP + diphosphate. This Buchnera aphidicola subsp. Acyrthosiphon pisum (strain APS) (Acyrthosiphon pisum symbiotic bacterium) protein is Glutamine--tRNA ligase.